Here is a 369-residue protein sequence, read N- to C-terminus: Carbamoyl phosphate synthase small chain (369 aa).

The interval 1–168 is CPSase; the sequence is MYGILVLEDG…KKVVKYPAKD (168 aa). 3 residues coordinate L-glutamine: serine 45, glycine 220, and glycine 222. The Glutamine amidotransferase type-1 domain maps to 172 to 364; sequence SCVVIDCGVK…VALGMKFKQE (193 aa). Cysteine 247 serves as the catalytic Nucleophile. Leucine 248, glutamine 251, asparagine 289, glycine 291, and phenylalanine 292 together coordinate L-glutamine. Active-site residues include histidine 337 and glutamate 339.

It belongs to the CarA family. As to quaternary structure, composed of two chains; the small (or glutamine) chain promotes the hydrolysis of glutamine to ammonia, which is used by the large (or ammonia) chain to synthesize carbamoyl phosphate. Tetramer of heterodimers (alpha,beta)4.

It catalyses the reaction hydrogencarbonate + L-glutamine + 2 ATP + H2O = carbamoyl phosphate + L-glutamate + 2 ADP + phosphate + 2 H(+). The enzyme catalyses L-glutamine + H2O = L-glutamate + NH4(+). It participates in amino-acid biosynthesis; L-arginine biosynthesis; carbamoyl phosphate from bicarbonate: step 1/1. The protein operates within pyrimidine metabolism; UMP biosynthesis via de novo pathway; (S)-dihydroorotate from bicarbonate: step 1/3. Functionally, small subunit of the glutamine-dependent carbamoyl phosphate synthetase (CPSase). CPSase catalyzes the formation of carbamoyl phosphate from the ammonia moiety of glutamine, carbonate, and phosphate donated by ATP, constituting the first step of 2 biosynthetic pathways, one leading to arginine and/or urea and the other to pyrimidine nucleotides. The small subunit (glutamine amidotransferase) binds and cleaves glutamine to supply the large subunit with the substrate ammonia. This is Carbamoyl phosphate synthase small chain from Methanococcus vannielii (strain ATCC 35089 / DSM 1224 / JCM 13029 / OCM 148 / SB).